A 407-amino-acid chain; its full sequence is Accessory Sec system protein translocase subunit SecY2 (407 aa).

10 consecutive transmembrane segments (helical) span residues 22-42 (IAFT…TIVD), 68-88 (LNVF…ISLI), 108-128 (EKFL…NQFV), 136-156 (FTEL…MWLA), 169-189 (PIVL…IVSI), 191-211 (ILML…LLLT), 245-265 (ISIM…NLIF), 280-300 (FGHY…GYLL), 343-363 (WFGT…SLLV), and 366-386 (LSEY…AMNI).

This sequence belongs to the SecY/SEC61-alpha family. SecY2 subfamily. As to quaternary structure, component of the accessory SecA2/SecY2 protein translocase complex required to export cell wall proteins. May form heterotrimers with SecE and SecG subunits.

The protein resides in the cell membrane. Part of the accessory SecA2/SecY2 system specifically required for export of possible cell wall proteins. The central subunit of a protein translocation channel. The protein is Accessory Sec system protein translocase subunit SecY2 of Staphylococcus pseudintermedius (strain ED99).